The chain runs to 326 residues: Hairy/enhancer-of-split related with YRPW motif-like protein (326 aa).

The tract at residues 1–56 (MKRPRAPSGSDGESDGPIDVGQENDLSQMARPLTTPSPSQMQARKKRRGIIEKRRR) is disordered. The tract at residues 42-111 (QARKKRRGII…GGTGFFDARA (70 aa)) is transcriptional repression and interaction with NCOR1 and SIN3A. Positions 43–98 (ARKKRRGIIEKRRRDRINSSLSELRRLVPTAFEKQGSSKLEKAEVLQMTVDHLKML) constitute a bHLH domain. The 38-residue stretch at 116-153 (FRSIGFRECLTEVIRYLGVLEGPSSHADPVRIRLLSHL) folds into the Orange domain. Disordered stretches follow at residues 223-260 (HRPA…PPPT) and 272-306 (PIPP…PTGR). A compositionally biased stretch (low complexity) spans 292 to 305 (SGSISSPCPSGPTG).

It belongs to the HEY family. Interacts with HES1, HDAC1, NCOR1 and SIN3A. Self-associates. Interacts with GATA4, GATA6, HEY1 and HEY2. As to expression, expressed in heart and at lower levels in brain, lung, muscle, ovary and testis.

Its subcellular location is the nucleus. Functionally, transcriptional repressor which binds preferentially to the canonical E box sequence 5'-CACGTG-3'. Downstream effector of Notch signaling required for cardiovascular development. Specifically required for the Notch-induced endocardial epithelial to mesenchymal transition, which is itself criticial for cardiac valve and septum development. Represses transcription by the cardiac transcriptional activators GATA4 and GATA6. The protein is Hairy/enhancer-of-split related with YRPW motif-like protein (Heyl) of Mus musculus (Mouse).